Reading from the N-terminus, the 128-residue chain is Crossover junction endodeoxyribonuclease Hjc (128 aa).

Residue E10 participates in Mg(2+) binding. The active site involves S30. Mg(2+) contacts are provided by D34 and E47.

This sequence belongs to the Holliday junction resolvase Hjc family. In terms of assembly, homodimer. The cofactor is Mg(2+).

It carries out the reaction Endonucleolytic cleavage at a junction such as a reciprocal single-stranded crossover between two homologous DNA duplexes (Holliday junction).. In terms of biological role, a structure-specific endonuclease that resolves Holliday junction (HJ) intermediates during genetic recombination. Cleaves 4-way DNA junctions introducing paired nicks in opposing strands, leaving a 5'-terminal phosphate and a 3'-terminal hydroxyl group that are subsequently ligated to produce recombinant products. This chain is Crossover junction endodeoxyribonuclease Hjc, found in Thermococcus kodakarensis (strain ATCC BAA-918 / JCM 12380 / KOD1) (Pyrococcus kodakaraensis (strain KOD1)).